The chain runs to 544 residues: Methionine--tRNA ligase (544 aa).

The 'HIGH' region motif lies at 10-20 (PYANGSLHLGH). Zn(2+)-binding residues include cysteine 141, cysteine 144, cysteine 153, and cysteine 156. A 'KMSKS' region motif is present at residues 329-333 (KLSTS). Residue threonine 332 coordinates ATP.

It belongs to the class-I aminoacyl-tRNA synthetase family. MetG type 1 subfamily. As to quaternary structure, monomer. Zn(2+) serves as cofactor.

The protein resides in the cytoplasm. It carries out the reaction tRNA(Met) + L-methionine + ATP = L-methionyl-tRNA(Met) + AMP + diphosphate. Functionally, is required not only for elongation of protein synthesis but also for the initiation of all mRNA translation through initiator tRNA(fMet) aminoacylation. The protein is Methionine--tRNA ligase of Bacillus cereus (strain G9842).